A 298-amino-acid polypeptide reads, in one-letter code: N-acetylmuramic acid 6-phosphate etherase (298 aa).

Residues 55 to 218 (IHAQVSGGGR…STGLMIKSGK (164 aa)) enclose the SIS domain. The Proton donor role is filled by E83. The active site involves E114.

This sequence belongs to the GCKR-like family. MurNAc-6-P etherase subfamily. Homodimer.

It carries out the reaction N-acetyl-D-muramate 6-phosphate + H2O = N-acetyl-D-glucosamine 6-phosphate + (R)-lactate. It participates in amino-sugar metabolism; 1,6-anhydro-N-acetylmuramate degradation. It functions in the pathway amino-sugar metabolism; N-acetylmuramate degradation. Its pathway is cell wall biogenesis; peptidoglycan recycling. Its function is as follows. Specifically catalyzes the cleavage of the D-lactyl ether substituent of MurNAc 6-phosphate, producing GlcNAc 6-phosphate and D-lactate. Together with AnmK, is also required for the utilization of anhydro-N-acetylmuramic acid (anhMurNAc) either imported from the medium or derived from its own cell wall murein, and thus plays a role in cell wall recycling. In Escherichia coli O7:K1 (strain IAI39 / ExPEC), this protein is N-acetylmuramic acid 6-phosphate etherase.